The primary structure comprises 852 residues: Disks large homolog 2 (852 aa).

Residues cysteine 5 and cysteine 7 are each lipidated (S-palmitoyl cysteine). Residue serine 28 is modified to Phosphoserine. Residue tyrosine 58 is modified to Phosphotyrosine. The residue at position 65 (serine 65) is a Phosphoserine. 2 consecutive PDZ domains span residues 98–184 (EITL…VRRR) and 193–279 (EIKL…VGKP). A phosphoserine mark is found at serine 307, serine 328, serine 360, serine 365, serine 406, and serine 414. In terms of domain architecture, PDZ 3 spans 421–501 (KVVLHKGSTG…QTVTIIAQYQ (81 aa)). Tyrosine 505 carries the phosphotyrosine modification. Phosphoserine occurs at positions 528, 530, and 553. The 71-residue stretch at 536 to 606 (KRSLYVRAMF…PSKRRVERKE (71 aa)) folds into the SH3 domain. The region spanning 662-837 (TRPVIILGPM…IYNQCKLVIE (176 aa)) is the Guanylate kinase-like domain. A phosphotyrosine mark is found at tyrosine 732 and tyrosine 737.

The protein belongs to the MAGUK family. In terms of assembly, interacts through its PDZ domains with NETO1. Interacts with NOS1/nNOS through second PDZ domain. Interacts with KCNJ2/Kir2.1 (via C-terminus) through one of its PDZ domains. Interacts with KCNJ4. Interacts with FRMPD4 (via C-terminus). Interacts with LRFN1. Interacts with LRFN2 and LRFN4. Interacts with FASLG. Interacts with ADAM22. Interacts with DGKI (via PDZ-binding motif). In terms of processing, palmitoylation of isoform 1 and isoform 2 is not required for targeting to postsynaptic density. Detected in juxtaparanodal zones in the central nervous system and at nerve terminal plexuses of basket cells in the cerebellum (at protein level). Brain. High levels in cerebellar Purkinje cells. Expressed in pyramidal cells of the Ammons's horn and granular cells of the dentate gyrus in the hippocampus as well as cerebral cortex and striatum. High levels in dorsal horn of spinal cord.

It localises to the cell membrane. The protein localises to the postsynaptic density. Its subcellular location is the synapse. The protein resides in the cell projection. It is found in the axon. It localises to the membrane. The protein localises to the perikaryon. Required for perception of chronic pain through NMDA receptor signaling. Regulates surface expression of NMDA receptors in dorsal horn neurons of the spinal cord. Interacts with the cytoplasmic tail of NMDA receptor subunits as well as inward rectifying potassium channels. Involved in regulation of synaptic stability at cholinergic synapses. Part of the postsynaptic protein scaffold of excitatory synapses. The sequence is that of Disks large homolog 2 (Dlg2) from Rattus norvegicus (Rat).